Reading from the N-terminus, the 396-residue chain is Peroxisome proliferator-activated receptor delta (396 aa).

The tract at residues 1–24 is disordered; the sequence is MKEEIPPRSPILDEQPSTPLEHQE. Residues 15 to 24 are compositionally biased toward polar residues; the sequence is QPSTPLEHQE. A DNA-binding region (nuclear receptor) is located at residues 28 to 102; the sequence is SVDCKICGDR…LGMSHNAIRF (75 aa). 2 consecutive NR C4-type zinc fingers follow at residues 31–51 and 68–90; these read CKIC…CEGC and CDRN…FNKC. One can recognise an NR LBD domain in the interval 166–394; the sequence is FVIHDMDTLW…HPLLQEIYRD (229 aa).

The protein belongs to the nuclear hormone receptor family. NR1 subfamily. In terms of assembly, heterodimer with the retinoid X receptor. Post-translationally, 'Lys-48'-linked polyubiquitinated; leading to proteasomal degradation. Deubiquitinated and stabilized by OTUD3. In terms of tissue distribution, ubiquitous.

It localises to the nucleus. In terms of biological role, ligand-activated transcription factor key mediator of energy metabolism in adipose tissues. Receptor that binds peroxisome proliferators such as hypolipidemic drugs and fatty acids. Has a preference for poly-unsaturated fatty acids, such as gamma-linoleic acid and eicosapentanoic acid. Once activated by a ligand, the receptor binds to promoter elements of target genes. Regulates the peroxisomal beta-oxidation pathway of fatty acids. Functions as a transcription activator for the acyl-CoA oxidase gene. Decreases expression of NPC1L1 once activated by a ligand. The sequence is that of Peroxisome proliferator-activated receptor delta (ppard) from Xenopus laevis (African clawed frog).